We begin with the raw amino-acid sequence, 571 residues long: Proline--tRNA ligase (571 aa).

Belongs to the class-II aminoacyl-tRNA synthetase family. ProS type 1 subfamily. In terms of assembly, homodimer.

Its subcellular location is the cytoplasm. It catalyses the reaction tRNA(Pro) + L-proline + ATP = L-prolyl-tRNA(Pro) + AMP + diphosphate. Functionally, catalyzes the attachment of proline to tRNA(Pro) in a two-step reaction: proline is first activated by ATP to form Pro-AMP and then transferred to the acceptor end of tRNA(Pro). As ProRS can inadvertently accommodate and process non-cognate amino acids such as alanine and cysteine, to avoid such errors it has two additional distinct editing activities against alanine. One activity is designated as 'pretransfer' editing and involves the tRNA(Pro)-independent hydrolysis of activated Ala-AMP. The other activity is designated 'posttransfer' editing and involves deacylation of mischarged Ala-tRNA(Pro). The misacylated Cys-tRNA(Pro) is not edited by ProRS. The polypeptide is Proline--tRNA ligase (Buchnera aphidicola subsp. Schizaphis graminum (strain Sg)).